The chain runs to 423 residues: Glutamate-1-semialdehyde 2,1-aminomutase (423 aa).

Lys259 is modified (N6-(pyridoxal phosphate)lysine).

The protein belongs to the class-III pyridoxal-phosphate-dependent aminotransferase family. HemL subfamily. As to quaternary structure, homodimer. The cofactor is pyridoxal 5'-phosphate.

Its subcellular location is the cytoplasm. The enzyme catalyses (S)-4-amino-5-oxopentanoate = 5-aminolevulinate. It participates in porphyrin-containing compound metabolism; protoporphyrin-IX biosynthesis; 5-aminolevulinate from L-glutamyl-tRNA(Glu): step 2/2. The chain is Glutamate-1-semialdehyde 2,1-aminomutase from Thermosipho africanus (strain TCF52B).